Consider the following 296-residue polypeptide: Phosphatidylglycerol--prolipoprotein diacylglyceryl transferase (296 aa).

Helical transmembrane passes span 17–37 (LAVRWYGLMYLVGFIAAIVVG), 59–79 (MMFYGVLGTVLGGRLGYVLFY), and 97–117 (GGMSFHGGFLGVTLAMMLFAW). Arginine 142 serves as a coordination point for a 1,2-diacyl-sn-glycero-3-phospho-(1'-sn-glycerol). 2 helical membrane-spanning segments follow: residues 230-250 (MGAVSALFLIGYGLARFTVEF) and 257-277 (FLGLLALGLSMGQWLSLPMIL).

Belongs to the Lgt family.

The protein localises to the cell inner membrane. The catalysed reaction is L-cysteinyl-[prolipoprotein] + a 1,2-diacyl-sn-glycero-3-phospho-(1'-sn-glycerol) = an S-1,2-diacyl-sn-glyceryl-L-cysteinyl-[prolipoprotein] + sn-glycerol 1-phosphate + H(+). Its pathway is protein modification; lipoprotein biosynthesis (diacylglyceryl transfer). Its function is as follows. Catalyzes the transfer of the diacylglyceryl group from phosphatidylglycerol to the sulfhydryl group of the N-terminal cysteine of a prolipoprotein, the first step in the formation of mature lipoproteins. The chain is Phosphatidylglycerol--prolipoprotein diacylglyceryl transferase from Burkholderia lata (strain ATCC 17760 / DSM 23089 / LMG 22485 / NCIMB 9086 / R18194 / 383).